Consider the following 854-residue polypeptide: Probable disease resistance protein At1g51480 (854 aa).

Residues 25-62 (RNYIHKMEANLDDLHTTMEELKNGRDDLLRRVSIEEDK) are a coiled coil. Positions 138-441 (AHKIPVPKVE…CEGYINPNRY (304 aa)) constitute an NB-ARC domain. Residue 180–187 (GMGGVGKT) participates in ATP binding. 6 LRR repeats span residues 514–535 (IVRQ…SKCS), 536–557 (NLST…FFLF), 560–582 (KLVV…ISNL), 584–605 (SLQY…MKKL), 607–629 (KLIY…SATL), and 631–652 (NLQV…MEEL).

It belongs to the disease resistance NB-LRR family.

In terms of biological role, probable disease resistance protein. The protein is Probable disease resistance protein At1g51480 of Arabidopsis thaliana (Mouse-ear cress).